A 600-amino-acid polypeptide reads, in one-letter code: MASNHKSSAARPVSRGGVGLTGRPPSGIRPLSGNIRVATAMPPGTARPGSRGCPIGTGGVLSSQIKVAHRPVTQQGLTGMKTGTKGPQRQILDKSYYLGLLRSKISELTTEVNKLQKGIEMYNQENSVYLSYEKRAETLAVEIKELQGQLADYNMLVDKLNTNTEMEEVMNDYNMLKAQNDRETQSLDVIFTERQAKEKQIRSVEEEIEQEKQATDDIIKNMSFENQVKYLEMKTTNEKLLQELDTLQQQLDSQNMKKESLEAEIAHSQVKQEAVLLHEKLYELESHRDQMIAEDKSIGSPMEEREKLLKQIKDDNQEIASMERQLTDTKEKINQFIEEIRQLDMDLEEHQGEMNQKYKELKKREEHMDTFIETFEETKNQELKRKAQIEANIVALLEHCSRNINRIEQISSITNQELKMMQDDLNFKSTEVQKSQSTAQNLTSDIQRLQLDLQKMELLESKMTEEQHSLKSKIKQMTTDLEIYNDLPALKSSGEEKIKKLHQERMILSTHRNAFKKIMEKQNIEYEALKTQLQENETHSQLTNLERKWQHLEQNNFAMKEFIATKSQESDYQPIKKNVTKQIAEYNKTIVDALHSTSGN.

A disordered region spans residues 1–33 (MASNHKSSAARPVSRGGVGLTGRPPSGIRPLSG). The tract at residues 1–90 (MASNHKSSAA…KTGTKGPQRQ (90 aa)) is basic region. Arg-51 is subject to Omega-N-methylarginine. Thr-73 is modified (phosphothreonine). Residues 98–482 (LGLLRSKISE…KIKQMTTDLE (385 aa)) are a coiled coil. The tract at residues 561-600 (EFIATKSQESDYQPIKKNVTKQIAEYNKTIVDALHSTSGN) is important for interaction with IFT27.

The protein belongs to the IFT74 family. Component of the IFT complex B, at least composed of IFT20, IFT22, IFT25, IFT27, IFT46, IFT52, TRAF3IP1/IFT54, IFT57, IFT74, IFT80, IFT81, and IFT88. Interacts with IFT81; the interaction is direct. Within the IFT complex B, IFT74 and IFT81 mediate the transport of tubulin within the cilium. Interacts (via basic region) with beta-tubulin (via acidic region); interaction is direct. Interacts with ARL13B and IFT88. Interacts (via the IFT74/IFT81 heterodimer) with RABL2B. Interacts with IFT57 and IFT70B. As to expression, highly expressed in adult and fetal kidney and expressed at lower level in adult heart, placenta, lung, liver and pancreas, and in fetal heart, lung and liver. Little to no expression was detected in adult brain and skeletal muscle or in fetal brain, thymus and spleen. Detected in sperm (at protein level).

It localises to the cell projection. The protein localises to the cilium. It is found in the cytoplasmic vesicle. The protein resides in the flagellum. Its subcellular location is the secretory vesicle. It localises to the acrosome. Component of the intraflagellar transport (IFT) complex B: together with IFT81, forms a tubulin-binding module that specifically mediates transport of tubulin within the cilium. Binds beta-tubulin via its basic region. Required for ciliogenesis. Essential for flagellogenesis during spermatogenesis. The chain is Intraflagellar transport protein 74 homolog (IFT74) from Homo sapiens (Human).